The primary structure comprises 662 residues: uncharacterized protein (662 aa).

Helical transmembrane passes span 10–30, 46–66, 68–88, 101–121, 167–187, 193–213, 217–237, 263–283, 285–305, 312–332, 342–362, 373–393, 394–414, 432–452, 460–480, and 485–505; these read SSIVSSALVSSAIGYAIGWPV, PVIGLGIFGAVAVSIFHFLPI, AINLMLIVLGLSAVAFWLSKG, GFCWFTVAFLLCLLPAFEIIP, LIYYYVWHFIAACSSVITGAT, IALTGMTALFSTFVVTWLAVA, SAYAAWWSLPLLFVGSLKPAV, PWVPQHVFSGTLALIAIMAYL, ILYSNAGRNMALAVFMGAILA, MWAGSLSLLLILPLVGALSVS, EVLISLSVTVVITLLCAAVLI, KVVEFWVFPIFAGDYWFLDIP, GFWLVLVFLEFGIIYLSFLIW, ALTVSVLAPLFCTQILHSVIM, VLIPSMLVMTALTSGLFSTTI, and LVGRLTTITAIILLAPSILVG.

The protein localises to the cell membrane. This is an uncharacterized protein from Sinorhizobium fredii (strain NBRC 101917 / NGR234).